The chain runs to 189 residues: Crossover junction endodeoxyribonuclease RuvC (189 aa).

Residues aspartate 7, glutamate 68, and aspartate 141 contribute to the active site. Mg(2+) is bound by residues aspartate 7, glutamate 68, and aspartate 141.

Belongs to the RuvC family. As to quaternary structure, homodimer which binds Holliday junction (HJ) DNA. The HJ becomes 2-fold symmetrical on binding to RuvC with unstacked arms; it has a different conformation from HJ DNA in complex with RuvA. In the full resolvosome a probable DNA-RuvA(4)-RuvB(12)-RuvC(2) complex forms which resolves the HJ. Mg(2+) serves as cofactor.

The protein localises to the cytoplasm. It catalyses the reaction Endonucleolytic cleavage at a junction such as a reciprocal single-stranded crossover between two homologous DNA duplexes (Holliday junction).. Its function is as follows. The RuvA-RuvB-RuvC complex processes Holliday junction (HJ) DNA during genetic recombination and DNA repair. Endonuclease that resolves HJ intermediates. Cleaves cruciform DNA by making single-stranded nicks across the HJ at symmetrical positions within the homologous arms, yielding a 5'-phosphate and a 3'-hydroxyl group; requires a central core of homology in the junction. The consensus cleavage sequence is 5'-(A/T)TT(C/G)-3'. Cleavage occurs on the 3'-side of the TT dinucleotide at the point of strand exchange. HJ branch migration catalyzed by RuvA-RuvB allows RuvC to scan DNA until it finds its consensus sequence, where it cleaves and resolves the cruciform DNA. The sequence is that of Crossover junction endodeoxyribonuclease RuvC from Chlorobium phaeovibrioides (strain DSM 265 / 1930) (Prosthecochloris vibrioformis (strain DSM 265)).